The chain runs to 164 residues: CDP-archaeol synthase (164 aa).

Helical transmembrane passes span 3–23 (LTVF…AVFA), 55–75 (AIGI…YHVI), 77–97 (VFDA…GAFI), and 122–142 (FLVY…AVVI).

The protein belongs to the CDP-archaeol synthase family. The cofactor is Mg(2+).

It localises to the cell membrane. The enzyme catalyses 2,3-bis-O-(geranylgeranyl)-sn-glycerol 1-phosphate + CTP + H(+) = CDP-2,3-bis-O-(geranylgeranyl)-sn-glycerol + diphosphate. Its pathway is membrane lipid metabolism; glycerophospholipid metabolism. Functionally, catalyzes the formation of CDP-2,3-bis-(O-geranylgeranyl)-sn-glycerol (CDP-archaeol) from 2,3-bis-(O-geranylgeranyl)-sn-glycerol 1-phosphate (DGGGP) and CTP. This reaction is the third ether-bond-formation step in the biosynthesis of archaeal membrane lipids. The polypeptide is CDP-archaeol synthase (Pyrobaculum aerophilum (strain ATCC 51768 / DSM 7523 / JCM 9630 / CIP 104966 / NBRC 100827 / IM2)).